The chain runs to 295 residues: tRNA-cytidine(32) 2-sulfurtransferase (295 aa).

The PP-loop motif signature appears at 63–68; the sequence is SGGKDS. 3 residues coordinate [4Fe-4S] cluster: Cys-138, Cys-141, and Cys-229.

Belongs to the TtcA family. As to quaternary structure, homodimer. It depends on Mg(2+) as a cofactor. [4Fe-4S] cluster is required as a cofactor.

The protein localises to the cytoplasm. It catalyses the reaction cytidine(32) in tRNA + S-sulfanyl-L-cysteinyl-[cysteine desulfurase] + AH2 + ATP = 2-thiocytidine(32) in tRNA + L-cysteinyl-[cysteine desulfurase] + A + AMP + diphosphate + H(+). It participates in tRNA modification. Its function is as follows. Catalyzes the ATP-dependent 2-thiolation of cytidine in position 32 of tRNA, to form 2-thiocytidine (s(2)C32). The sulfur atoms are provided by the cysteine/cysteine desulfurase (IscS) system. The protein is tRNA-cytidine(32) 2-sulfurtransferase of Mesorhizobium japonicum (strain LMG 29417 / CECT 9101 / MAFF 303099) (Mesorhizobium loti (strain MAFF 303099)).